We begin with the raw amino-acid sequence, 564 residues long: Efflux pump hmp6 (564 aa).

Residues 1–25 are compositionally biased toward basic and acidic residues; it reads MEKHAEPEKSLGDKEFQEKELHEKP. The segment at 1 to 46 is disordered; sequence MEKHAEPEKSLGDKEFQEKELHEKPAPAASEDISGDSSVNKEDGPD. 8 consecutive transmembrane segments (helical) span residues 58 to 78, 96 to 118, 125 to 145, 156 to 176, 186 to 206, 214 to 234, 259 to 279, and 289 to 309; these read LAVV…DTTI, VGWY…GKLY, IVFT…GVAP, IAGL…IHSV, GMIV…GGAF, WCFY…LFFF, FGTF…QMGG, and IIVL…VQFF. N-linked (GlcNAc...) asparagine glycosylation is found at N312 and N322. 4 consecutive transmembrane segments (helical) span residues 330–350, 361–383, 395–415, and 452–472; these read IYMF…PIWF, SGIR…GALV, ASVV…VDAS, and IGTA…VSAA.

The protein belongs to the major facilitator superfamily. TCR/Tet family.

Its subcellular location is the cell membrane. Its function is as follows. Efflux pump that might be required for efficient secretion of hypothemycin or other secondary metabolies produced by the hypothemycin gene cluster. The protein is Efflux pump hmp6 of Hypomyces subiculosus (Nectria subiculosa).